The sequence spans 164 residues: MVNSVVFFDITVDGKPLGRISIKLFADKIPKTAENFRALSTGEKGFRYKGSCFHRIIPGFMCQGGDFTRPNGTDDKSIYGEKFDDENLIRKHTGSGILSMVNAGPNTNGSQLFICTAKTEWLDGKHVAFGKVKERVNIVEAMEHFGYRNSKTSKKITIADCGQF.

A PPIase cyclophilin-type domain is found at 7–163 (FFDITVDGKP…KKITIADCGQ (157 aa)). 2 N-linked (GlcNAc...) asparagine glycosylation sites follow: Asn-71 and Asn-108.

The protein belongs to the cyclophilin-type PPIase family. PPIase A subfamily.

The protein resides in the cytoplasm. The catalysed reaction is [protein]-peptidylproline (omega=180) = [protein]-peptidylproline (omega=0). In terms of biological role, PPIases accelerate the folding of proteins. It catalyzes the cis-trans isomerization of proline imidic peptide bonds in oligopeptides. The sequence is that of Peptidyl-prolyl cis-trans isomerase A-like 4H from Homo sapiens (Human).